Consider the following 108-residue polypeptide: UPF0060 membrane protein YnfA (108 aa).

Over 1-5 (MIKTT) the chain is Periplasmic. Residues 6–26 (LLFFATALCEIIGCFLPWLWL) traverse the membrane as a helical segment. Over 27–30 (KRNA) the chain is Cytoplasmic. The helical transmembrane segment at 31–51 (SIWLLLPAGISLALFVWLLTL) threads the bilayer. The Periplasmic segment spans residues 52-60 (HPAASGRVY). The helical transmembrane segment at 61–81 (AAYGGVYVCTALIWLRVVDGV) threads the bilayer. Residues 82–84 (KLS) lie on the Cytoplasmic side of the membrane. A helical membrane pass occupies residues 85–105 (LYDWTGALIALCGMLIIVAGW). Residues 106–108 (GRT) lie on the Periplasmic side of the membrane.

It belongs to the UPF0060 family.

It localises to the cell inner membrane. This Escherichia coli (strain SMS-3-5 / SECEC) protein is UPF0060 membrane protein YnfA.